A 387-amino-acid chain; its full sequence is Enoyl-[acyl-carrier-protein] reductase 2, mitochondrial (387 aa).

A mitochondrion-targeting transit peptide spans 1–23 (MYRNQLARASLRSTSSINQIRNM). Residue Tyr-79 is the Proton donor of the active site. NADP(+) is bound by residues Asn-172, 199–202 (NSAV), 222–224 (RDR), 297–300 (YGGM), 322–324 (FWV), and Lys-382.

It belongs to the zinc-containing alcohol dehydrogenase family. Quinone oxidoreductase subfamily. Homodimer.

It is found in the mitochondrion matrix. The enzyme catalyses a 2,3-saturated acyl-[ACP] + NADP(+) = a (2E)-enoyl-[ACP] + NADPH + H(+). Catalyzes the NADPH-dependent reduction of trans-2-enoyl thioesters in mitochondrial fatty acid synthesis (fatty acid synthesis type II). Fatty acid chain elongation in mitochondria uses acyl carrier protein (ACP) as an acyl group carrier, but the enzyme accepts both ACP and CoA thioesters as substrates in vitro. Required for respiration and the maintenance of the mitochondrial compartment. The polypeptide is Enoyl-[acyl-carrier-protein] reductase 2, mitochondrial (ETR2) (Debaryomyces hansenii (strain ATCC 36239 / CBS 767 / BCRC 21394 / JCM 1990 / NBRC 0083 / IGC 2968) (Yeast)).